The primary structure comprises 70 residues: Protease inhibitor HPI (70 aa).

N-acetylalanine is present on alanine 2. Position 5 is an S-glutathionyl cysteine; alternate (cysteine 5).

This sequence belongs to the protease inhibitor I13 (potato type I serine protease inhibitor) family. In terms of assembly, monomer and homodimer; disulfide-linked. Post-translationally, occurs in 3 forms that differ in the modification of Cys-5, HPI-1 forms a homodimer through a disulfide bond, HPI-2a is modified by glutathionylation, and HPI-2b is covalently modified by addition of an unidentified adduct but not by a disulfide linkage.

In terms of biological role, inhibitor of serine proteases, strongly inhibits subtilisin A and weakly inhibits trypsin. Does not inhibit chymotrypsin, papain, pepsin, pronase E, protease type XIII and thermolysin. HPI-1 inhibits subtilisin A with an Ki of 0.21 nM. HPI-2a inhibits subtilisin A with an Ki of 0.08 nM. HPI-2b inhibits subtilisin A with an Ki of 0.1 nM. This is Protease inhibitor HPI from Hevea brasiliensis (Para rubber tree).